The chain runs to 763 residues: 5-methyltetrahydropteroyltriglutamate--homocysteine methyltransferase (763 aa).

5-methyltetrahydropteroyltri-L-glutamate contacts are provided by residues 16 to 19 (RELK) and Lys117. L-homocysteine is bound by residues 440–442 (IGS) and Glu493. L-methionine-binding positions include 440–442 (IGS) and Glu493. Residues 524-525 (RC) and Trp570 each bind 5-methyltetrahydropteroyltri-L-glutamate. Asp608 contacts L-homocysteine. Asp608 provides a ligand contact to L-methionine. Glu614 is a binding site for 5-methyltetrahydropteroyltri-L-glutamate. His650, Cys652, and Glu674 together coordinate Zn(2+). His703 serves as the catalytic Proton donor. Cys735 serves as a coordination point for Zn(2+).

This sequence belongs to the vitamin-B12 independent methionine synthase family. Zn(2+) serves as cofactor.

The catalysed reaction is 5-methyltetrahydropteroyltri-L-glutamate + L-homocysteine = tetrahydropteroyltri-L-glutamate + L-methionine. It participates in amino-acid biosynthesis; L-methionine biosynthesis via de novo pathway; L-methionine from L-homocysteine (MetE route): step 1/1. Catalyzes the transfer of a methyl group from 5-methyltetrahydrofolate to homocysteine resulting in methionine formation. This Alcanivorax borkumensis (strain ATCC 700651 / DSM 11573 / NCIMB 13689 / SK2) protein is 5-methyltetrahydropteroyltriglutamate--homocysteine methyltransferase.